The following is a 670-amino-acid chain: DNA ligase (670 aa).

Residues 33 to 37 (DAEYD), 82 to 83 (SL), and Glu-114 contribute to the NAD(+) site. Lys-116 functions as the N6-AMP-lysine intermediate in the catalytic mechanism. Residues Arg-137, Glu-174, Lys-291, and Lys-315 each contribute to the NAD(+) site. Zn(2+) is bound by residues Cys-409, Cys-412, Cys-427, and Cys-433. Residues 593–670 (GVELPLEGKT…TEQDLLNLMK (78 aa)) form the BRCT domain.

This sequence belongs to the NAD-dependent DNA ligase family. LigA subfamily. Requires Mg(2+) as cofactor. Mn(2+) serves as cofactor.

The catalysed reaction is NAD(+) + (deoxyribonucleotide)n-3'-hydroxyl + 5'-phospho-(deoxyribonucleotide)m = (deoxyribonucleotide)n+m + AMP + beta-nicotinamide D-nucleotide.. DNA ligase that catalyzes the formation of phosphodiester linkages between 5'-phosphoryl and 3'-hydroxyl groups in double-stranded DNA using NAD as a coenzyme and as the energy source for the reaction. It is essential for DNA replication and repair of damaged DNA. The polypeptide is DNA ligase (Vibrio campbellii (strain ATCC BAA-1116)).